The sequence spans 144 residues: Pleckstrin homology-like domain family A member 2 (144 aa).

The PH domain occupies 18 to 111 (ILCEGELEKR…AAITMALIDF (94 aa)). S140 is modified (phosphoserine).

It belongs to the PHLDA2 family. Specifically expressed at high levels in extraembryonic tissues in the developing conceptus (at protein level). Expressed in placenta and yolc sac. Expressed at low levels in fetal liver and kidney.

The protein localises to the cytoplasm. The protein resides in the membrane. Functionally, plays a role in regulating placenta growth. May act via its PH domain that competes with other PH domain-containing proteins, thereby preventing their binding to membrane lipids. This is Pleckstrin homology-like domain family A member 2 (Phlda2) from Mus musculus (Mouse).